A 220-amino-acid polypeptide reads, in one-letter code: Pyridoxine/pyridoxamine 5'-phosphate oxidase (220 aa).

Substrate-binding positions include 13–16 and Lys-77; that span reads RVEY. Residues 72-77, 87-88, Lys-94, and Gln-116 contribute to the FMN site; these read RTVLCK and FT. Tyr-134, Arg-138, and Ser-142 together coordinate substrate. Residues 151 to 152 and Trp-197 contribute to the FMN site; that span reads QS. A substrate-binding site is contributed by 203-205; it reads RLH. Arg-207 is an FMN binding site.

It belongs to the pyridoxamine 5'-phosphate oxidase family. Homodimer. FMN serves as cofactor.

It carries out the reaction pyridoxamine 5'-phosphate + O2 + H2O = pyridoxal 5'-phosphate + H2O2 + NH4(+). The enzyme catalyses pyridoxine 5'-phosphate + O2 = pyridoxal 5'-phosphate + H2O2. It participates in cofactor metabolism; pyridoxal 5'-phosphate salvage; pyridoxal 5'-phosphate from pyridoxamine 5'-phosphate: step 1/1. The protein operates within cofactor metabolism; pyridoxal 5'-phosphate salvage; pyridoxal 5'-phosphate from pyridoxine 5'-phosphate: step 1/1. Functionally, catalyzes the oxidation of either pyridoxine 5'-phosphate (PNP) or pyridoxamine 5'-phosphate (PMP) into pyridoxal 5'-phosphate (PLP). This Mycolicibacterium paratuberculosis (strain ATCC BAA-968 / K-10) (Mycobacterium paratuberculosis) protein is Pyridoxine/pyridoxamine 5'-phosphate oxidase.